The following is a 108-amino-acid chain: uncharacterized protein (108 aa).

A helical transmembrane segment spans residues 10–32 (LQAPYILCTSFITLKIHNFFFFF).

It localises to the membrane. This is an uncharacterized protein from Saccharomyces cerevisiae (strain ATCC 204508 / S288c) (Baker's yeast).